Reading from the N-terminus, the 183-residue chain is Ferritin heavy chain (183 aa).

N-acetylmethionine is present on Met-1. An N-acetylthreonine; in Ferritin heavy chain, N-terminally processed modification is found at Thr-2. Residues 11 to 160 (QNYHQDSEAA…DHVTNLRKMG (150 aa)) enclose the Ferritin-like diiron domain. Fe cation is bound by residues Glu-28, Glu-63, His-66, Glu-108, and Gln-142. Phosphoserine occurs at positions 179 and 183.

This sequence belongs to the ferritin family. Oligomer of 24 subunits. There are two types of subunits: L (light) chain and H (heavy) chain. The major chain can be light or heavy, depending on the species and tissue type. The functional molecule forms a roughly spherical shell with a diameter of 12 nm and contains a central cavity into which the insoluble mineral iron core is deposited. Interacts with NCOA4; NCOA4 promotes targeting of the iron-binding ferritin complex to autolysosomes following starvation or iron depletion.

The protein resides in the cytoplasm. Its subcellular location is the lysosome. It is found in the cytoplasmic vesicle. It localises to the autophagosome. It catalyses the reaction 4 Fe(2+) + O2 + 4 H(+) = 4 Fe(3+) + 2 H2O. Functionally, stores iron in a soluble, non-toxic, readily available form. Important for iron homeostasis. Has ferroxidase activity. Iron is taken up in the ferrous form and deposited as ferric hydroxides after oxidation. Also plays a role in delivery of iron to cells. Mediates iron uptake in capsule cells of the developing kidney. Delivery to lysosomes is mediated by the cargo receptor NCOA4 for autophagic degradation and release of iron. The protein is Ferritin heavy chain (FTH1) of Felis catus (Cat).